Here is a 258-residue protein sequence, read N- to C-terminus: Imidazole glycerol phosphate synthase subunit HisF (258 aa).

Catalysis depends on residues Asp-11 and Asp-130.

It belongs to the HisA/HisF family. Heterodimer of HisH and HisF.

The protein resides in the cytoplasm. It catalyses the reaction 5-[(5-phospho-1-deoxy-D-ribulos-1-ylimino)methylamino]-1-(5-phospho-beta-D-ribosyl)imidazole-4-carboxamide + L-glutamine = D-erythro-1-(imidazol-4-yl)glycerol 3-phosphate + 5-amino-1-(5-phospho-beta-D-ribosyl)imidazole-4-carboxamide + L-glutamate + H(+). The protein operates within amino-acid biosynthesis; L-histidine biosynthesis; L-histidine from 5-phospho-alpha-D-ribose 1-diphosphate: step 5/9. Functionally, IGPS catalyzes the conversion of PRFAR and glutamine to IGP, AICAR and glutamate. The HisF subunit catalyzes the cyclization activity that produces IGP and AICAR from PRFAR using the ammonia provided by the HisH subunit. This chain is Imidazole glycerol phosphate synthase subunit HisF, found in Pectobacterium carotovorum subsp. carotovorum (strain PC1).